The following is a 66-amino-acid chain: Large ribosomal subunit protein bL33c (66 aa).

This sequence belongs to the bacterial ribosomal protein bL33 family.

It is found in the plastid. It localises to the chloroplast. This Citrus sinensis (Sweet orange) protein is Large ribosomal subunit protein bL33c.